A 216-amino-acid polypeptide reads, in one-letter code: Ethylene-responsive transcription factor ERF016 (216 aa).

Residues lysine 6–proline 63 constitute a DNA-binding region (AP2/ERF). A disordered region spans residues glutamate 121–asparagine 145. Residues glycine 135–asparagine 145 are compositionally biased toward low complexity.

This sequence belongs to the AP2/ERF transcription factor family. ERF subfamily.

Its subcellular location is the nucleus. Its function is as follows. Probably acts as a transcriptional activator. Binds to the GCC-box pathogenesis-related promoter element. May be involved in the regulation of gene expression by stress factors and by components of stress signal transduction pathways. This Arabidopsis thaliana (Mouse-ear cress) protein is Ethylene-responsive transcription factor ERF016 (ERF016).